The sequence spans 783 residues: Probable phosphoketolase (783 aa).

This sequence belongs to the XFP family. Thiamine diphosphate is required as a cofactor.

This Rhodopseudomonas palustris (strain ATCC BAA-98 / CGA009) protein is Probable phosphoketolase.